Consider the following 336-residue polypeptide: MKERIVNLETLDFEISQEVSLRPSLWEDFIGQEKIKSNLQISICAAKKRQESLDHMLFFGPPGLGKTSISHIIAKEMETNIKITAAPMIEKSGDLAAILTNLQAKDILFIDEIHRLSPAIEEVLYPAMEDFRLDIIIGSGPAAQTIKIDLPPFTLIGATTRAGMLSNPLRDRFGMSFRMQFYNPSELALIIKKAAVKLNQDIKQESADEIAKRSRGTPRIALRLLKRVRDFALVKNSSLMDLNITLHALNELGVNELGFDEADLAYLSLLANAQGKPVGLNTIAASMREDEGTIEDVIEPFLLANGYLERTAKGRIATPKTHELLKIPTLNPQTLF.

Positions M1–Y182 are large ATPase domain (RuvB-L). ATP is bound by residues L21, R22, G63, K66, T67, S68, E129–F131, R172, Y182, and R219. T67 contacts Mg(2+). Positions N183–G253 are small ATPAse domain (RuvB-S). Residues E256–F336 are head domain (RuvB-H). The DNA site is built by R310 and R315.

This sequence belongs to the RuvB family. Homohexamer. Forms an RuvA(8)-RuvB(12)-Holliday junction (HJ) complex. HJ DNA is sandwiched between 2 RuvA tetramers; dsDNA enters through RuvA and exits via RuvB. An RuvB hexamer assembles on each DNA strand where it exits the tetramer. Each RuvB hexamer is contacted by two RuvA subunits (via domain III) on 2 adjacent RuvB subunits; this complex drives branch migration. In the full resolvosome a probable DNA-RuvA(4)-RuvB(12)-RuvC(2) complex forms which resolves the HJ.

The protein localises to the cytoplasm. It catalyses the reaction ATP + H2O = ADP + phosphate + H(+). The RuvA-RuvB-RuvC complex processes Holliday junction (HJ) DNA during genetic recombination and DNA repair, while the RuvA-RuvB complex plays an important role in the rescue of blocked DNA replication forks via replication fork reversal (RFR). RuvA specifically binds to HJ cruciform DNA, conferring on it an open structure. The RuvB hexamer acts as an ATP-dependent pump, pulling dsDNA into and through the RuvAB complex. RuvB forms 2 homohexamers on either side of HJ DNA bound by 1 or 2 RuvA tetramers; 4 subunits per hexamer contact DNA at a time. Coordinated motions by a converter formed by DNA-disengaged RuvB subunits stimulates ATP hydrolysis and nucleotide exchange. Immobilization of the converter enables RuvB to convert the ATP-contained energy into a lever motion, pulling 2 nucleotides of DNA out of the RuvA tetramer per ATP hydrolyzed, thus driving DNA branch migration. The RuvB motors rotate together with the DNA substrate, which together with the progressing nucleotide cycle form the mechanistic basis for DNA recombination by continuous HJ branch migration. Branch migration allows RuvC to scan DNA until it finds its consensus sequence, where it cleaves and resolves cruciform DNA. This Helicobacter pylori (strain ATCC 700392 / 26695) (Campylobacter pylori) protein is Holliday junction branch migration complex subunit RuvB.